Here is a 341-residue protein sequence, read N- to C-terminus: tRNA N6-adenosine threonylcarbamoyltransferase (341 aa).

Fe cation-binding residues include H116 and H120. Residues 139–143 (LVSGG), D172, G185, and N274 each bind substrate. D302 provides a ligand contact to Fe cation.

Belongs to the KAE1 / TsaD family. Requires Fe(2+) as cofactor.

It localises to the cytoplasm. It catalyses the reaction L-threonylcarbamoyladenylate + adenosine(37) in tRNA = N(6)-L-threonylcarbamoyladenosine(37) in tRNA + AMP + H(+). In terms of biological role, required for the formation of a threonylcarbamoyl group on adenosine at position 37 (t(6)A37) in tRNAs that read codons beginning with adenine. Is involved in the transfer of the threonylcarbamoyl moiety of threonylcarbamoyl-AMP (TC-AMP) to the N6 group of A37, together with TsaE and TsaB. TsaD likely plays a direct catalytic role in this reaction. The polypeptide is tRNA N6-adenosine threonylcarbamoyltransferase (Vesicomyosocius okutanii subsp. Calyptogena okutanii (strain HA)).